The primary structure comprises 413 residues: Hemolin (413 aa).

Residues 1–18 (MVSKSIVALAACVAMCVA) form the signal peptide. 4 Ig-like C2-type domains span residues 25 to 112 (PVLK…HIIS), 121 to 215 (PTTF…LVGY), 233 to 322 (PMYV…VKLT), and 327 to 411 (PRFT…TLVI). Disulfide bonds link cysteine 46–cysteine 97, cysteine 141–cysteine 199, cysteine 252–cysteine 305, and cysteine 349–cysteine 395. Asparagine 283 is a glycosylation site (N-linked (GlcNAc...) asparagine).

It belongs to the hemolin family. Hemolymph.

It is found in the secreted. Functionally, insect-immune protein with antimicrobial activity. Forms a protein complex at the bacterial surface. Can inhibit hemocyte aggregation. This is Hemolin from Manduca sexta (Tobacco hawkmoth).